The chain runs to 169 residues: Ribosome maturation factor RimM (169 aa).

In terms of domain architecture, PRC barrel spans 96–169; that stretch reads DGEYYWADLI…RILVDWGLDY (74 aa).

Belongs to the RimM family. As to quaternary structure, binds ribosomal protein uS19.

The protein localises to the cytoplasm. In terms of biological role, an accessory protein needed during the final step in the assembly of 30S ribosomal subunit, possibly for assembly of the head region. Essential for efficient processing of 16S rRNA. May be needed both before and after RbfA during the maturation of 16S rRNA. It has affinity for free ribosomal 30S subunits but not for 70S ribosomes. This Chromobacterium violaceum (strain ATCC 12472 / DSM 30191 / JCM 1249 / CCUG 213 / NBRC 12614 / NCIMB 9131 / NCTC 9757 / MK) protein is Ribosome maturation factor RimM.